The primary structure comprises 334 residues: L-lactate dehydrogenase B chain (334 aa).

30 to 58 lines the NAD(+) pocket; the sequence is GQVGMACAVSVLLKELADELALVDILEDK. Substrate is bound by residues arginine 107, asparagine 139, and arginine 170. Asparagine 139 serves as a coordination point for NAD(+). Histidine 194 acts as the Proton acceptor in catalysis. Residue threonine 249 participates in substrate binding.

Belongs to the LDH/MDH superfamily. LDH family. Homotetramer.

It localises to the cytoplasm. The catalysed reaction is (S)-lactate + NAD(+) = pyruvate + NADH + H(+). It participates in fermentation; pyruvate fermentation to lactate; (S)-lactate from pyruvate: step 1/1. Interconverts simultaneously and stereospecifically pyruvate and lactate with concomitant interconversion of NADH and NAD(+). The sequence is that of L-lactate dehydrogenase B chain (ldhb) from Xenopus laevis (African clawed frog).